The chain runs to 549 residues: Mitogen-activated protein kinase 15 (549 aa).

Residues 1-20 (MCAAEVDRHVAQRYLIKRRL) are ubiquitin-conjugating. One can recognise a Protein kinase domain in the interval 14-305 (YLIKRRLGKG…AEQALQHPYV (292 aa)). Residues 20-28 (LGKGAYGIV) and Lys43 contribute to the ATP site. Asp138 (proton acceptor) is an active-site residue. At Thr176 the chain carries Phosphothreonine. A TXY motif is present at residues 176-178 (TEY). Tyr178 carries the phosphotyrosine modification. Residues 266–286 (LDALLPPDTPPEALDLLKRLL) form a necessary to interact with ESRRA, to regulate its subcellular localization and to inhibit its transcriptional activity region. The requires for interaction with GABARAP, MAP1LC3B AND GABARAPL1 stretch occupies residues 301 to 382 (QHPYVQRFHC…ARTQSLKSGV (82 aa)). The interval 370–507 (ASPARTQSLK…PEPRPGRRMF (138 aa)) is disordered. PXXXP motif repeat units follow at residues 380–384 (SGVLP) and 387–391 (PAETP). 2 PXXXP motif; regulates binding with chromatin and interaction with PCNA repeats span residues 395 to 399 (RGPKP) and 403 to 407 (PGHDP). Residues 403–416 (PGHDPEHVEVRRQS) are compositionally biased toward basic and acidic residues. The residue at position 451 (Arg451) is an Omega-N-methylarginine. A compositionally biased stretch (polar residues) spans 456–467 (SLTSQAEAQAAN). Low complexity predominate over residues 483 to 492 (AVGARRVPSR). Basic and acidic residues predominate over residues 493 to 502 (LPREAPEPRP).

Belongs to the protein kinase superfamily. CMGC Ser/Thr protein kinase family. MAP kinase subfamily. In terms of assembly, interacts with TGFB1I1. Interacts with CSK/c-Src, ABL1 and RET. Interacts with GABARAP, MAP1LC3B and GABARAPL1; controls, in a kinase-dependent fashion, both basal and starvation-induced autophagy. Interacts with ESRRA; promotes re-localization of ESRRA to the cytoplasm through a XPO1-dependent mechanism then inhibits ESRRA transcriptional activity. Interacts with PCNA; the interaction is chromatin binding- and kinase activity-dependent and prevents MDM2-mediated PCNA destruction by inhibiting the association of PCNA with MDM2. Interacts with DVL2. Interacts with CLIC3; MAPK15 does not phosphorylates CLIC3. Post-translationally, autophosphorylated on Thr-176 and Tyr-178; activates the enzyme. Ubiquitinated. Ubiquitination may allow its tight kinase activity regulation and rapid turnover. May be ubiquitinated by a SCF E3 ligase. In terms of tissue distribution, expressed at all stages of oocyte meiotic maturation.

The protein localises to the cytoplasm. It is found in the cytoskeleton. Its subcellular location is the cilium basal body. The protein resides in the cell junction. It localises to the tight junction. The protein localises to the microtubule organizing center. It is found in the centrosome. Its subcellular location is the centriole. The protein resides in the cytoplasmic vesicle. It localises to the autophagosome. The protein localises to the golgi apparatus. It is found in the nucleus. Its subcellular location is the spindle. It carries out the reaction L-seryl-[protein] + ATP = O-phospho-L-seryl-[protein] + ADP + H(+). The catalysed reaction is L-threonyl-[protein] + ATP = O-phospho-L-threonyl-[protein] + ADP + H(+). With respect to regulation, activated by threonine and tyrosine phosphorylation. Inhibited by dual specificity phosphatases, such as DUSP1. Phosphorylation and activation in response to DNA damaging agents, serum stimulation. Constitutively activated when phosphorylated on Tyr-178. Activity depends on the relative rates of MAPK15 autophosphorylation and dephosphorylation by PTPN1. In terms of biological role, atypical MAPK protein that regulates several process such as autophagy, ciliogenesis, protein trafficking/secretion and genome integrity, in a kinase activity-dependent manner. Controls both, basal and starvation-induced autophagy throught its interaction with GABARAP, MAP1LC3B and GABARAPL1 leading to autophagosome formation, SQSTM1 degradation and reduced MAP1LC3B inhibitory phosphorylation. Regulates primary cilium formation and the localization of ciliary proteins involved in cilium structure, transport, and signaling. Prevents the relocation of the sugar-adding enzymes from the Golgi to the endoplasmic reticulum, thereby restricting the production of sugar-coated proteins. Upon amino-acid starvation, mediates transitional endoplasmic reticulum site disassembly and inhibition of secretion. Binds to chromatin leading to MAPK15 activation and interaction with PCNA, that which protects genomic integrity by inhibiting MDM2-mediated degradation of PCNA. Regulates DA transporter (DAT) activity and protein expression via activation of RhoA. In response to H(2)O(2) treatment phosphorylates ELAVL1, thus preventing it from binding to the PDCD4 3'UTR and rendering the PDCD4 mRNA accessible to miR-21 and leading to its degradation and loss of protein expression. Also functions in a kinase activity-independent manner as a negative regulator of growth. Phosphorylates in vitro FOS and MBP. During oocyte maturation, plays a key role in the microtubule organization and meiotic cell cycle progression in oocytes, fertilized eggs, and early embryos. Interacts with ESRRA promoting its re-localization from the nucleus to the cytoplasm and then prevents its transcriptional activity. The protein is Mitogen-activated protein kinase 15 of Mus musculus (Mouse).